The sequence spans 330 residues: DNA-directed RNA polymerase I subunit RPA43 (330 aa).

The segment at 251–330 is disordered; it reads ADVTDVTPQE…ANFESPKKRQ (80 aa). 3 positions are modified to phosphoserine: serine 306, serine 318, and serine 325. The span at 317-330 shows a compositional bias: basic and acidic residues; sequence HSEEANFESPKKRQ.

The protein belongs to the eukaryotic RPA43 RNA polymerase subunit family. As to quaternary structure, component of the RNA polymerase I (Pol I) complex consisting of 13 subunits: a ten-subunit catalytic core composed of POLR1A/RPA1, POLR1B/RPA2, POLR1C/RPAC1, POLR1D/RPAC2, POLR1H/RPA12, POLR2E/RPABC1, POLR2F/RPABC2, POLR2H/RPABC3, POLR2K/RPABC4 and POLR2L/RPABC5; a mobile stalk subunit POLR1F/RPA43 protruding from the core and additional subunits homologous to general transcription factors POLR1E/RPA49 and POLR1G/RPA34. Interacts with RRN3/TIF-IA. Interacts with RRN3/TIF-IA. In terms of tissue distribution, widely expressed.

Its subcellular location is the nucleus. It is found in the nucleolus. Its function is as follows. Component of RNA polymerase I (Pol I), a DNA-dependent RNA polymerase which synthesizes ribosomal RNA precursors using the four ribonucleoside triphosphates as substrates. Through its association with RRN3/TIF-IA may be involved in recruitment of Pol I to rDNA promoters. In Mus musculus (Mouse), this protein is DNA-directed RNA polymerase I subunit RPA43.